A 95-amino-acid polypeptide reads, in one-letter code: MALDKTTVAKIATLARLDIEEDRMEALAGELSGILDWIEQLAEVDTSGVAAMTSVADLALAWREDAVTDGGYADRVLANAPESQDGCFLVPKVVE.

The protein belongs to the GatC family. Heterotrimer of A, B and C subunits.

The enzyme catalyses L-glutamyl-tRNA(Gln) + L-glutamine + ATP + H2O = L-glutaminyl-tRNA(Gln) + L-glutamate + ADP + phosphate + H(+). It catalyses the reaction L-aspartyl-tRNA(Asn) + L-glutamine + ATP + H2O = L-asparaginyl-tRNA(Asn) + L-glutamate + ADP + phosphate + 2 H(+). Its function is as follows. Allows the formation of correctly charged Asn-tRNA(Asn) or Gln-tRNA(Gln) through the transamidation of misacylated Asp-tRNA(Asn) or Glu-tRNA(Gln) in organisms which lack either or both of asparaginyl-tRNA or glutaminyl-tRNA synthetases. The reaction takes place in the presence of glutamine and ATP through an activated phospho-Asp-tRNA(Asn) or phospho-Glu-tRNA(Gln). This is Aspartyl/glutamyl-tRNA(Asn/Gln) amidotransferase subunit C from Rhodospirillum rubrum (strain ATCC 11170 / ATH 1.1.1 / DSM 467 / LMG 4362 / NCIMB 8255 / S1).